A 400-amino-acid chain; its full sequence is Subtilisin-like protease CPC735_013700 (400 aa).

An N-terminal signal peptide occupies residues methionine 1 to alanine 19. The propeptide occupies alanine 20–serine 116. Residues tyrosine 36–isoleucine 115 enclose the Inhibitor I9 domain. The 275-residue stretch at serine 126–lysine 400 folds into the Peptidase S8 domain. Residues aspartate 161 and histidine 192 each act as charge relay system in the active site. Asparagine 252 carries N-linked (GlcNAc...) asparagine glycosylation. Serine 346 functions as the Charge relay system in the catalytic mechanism. Asparagine 396 is a glycosylation site (N-linked (GlcNAc...) asparagine).

This sequence belongs to the peptidase S8 family.

The protein localises to the secreted. In terms of biological role, secreted subtilisin-like serine protease with keratinolytic activity that contributes to pathogenicity. The protein is Subtilisin-like protease CPC735_013700 of Coccidioides posadasii (strain C735) (Valley fever fungus).